The sequence spans 460 residues: MNTSAPPAVSPNITVLAPGKGPWQVAFIGITTGLLSLATVTGNLLVLISFKVNTELKTVNNYFLLSLACADLIIGTFSMNLYTTYLLMGHWALGTLACDLWLALDYVASNASVMNLLLISFDRYFSVTRPLSYRAKRTPRRAALMIGLAWLVSFVLWAPAILFWQYLVGERTVLAGQCYIQFLSQPIITFGTAMAAFYLPVTVMCTLYWRIYRETENRARELAALQGSETPGKGGGSSSSSERSQPGAEGSPETPPGRCCRCCRAPRLLQAYSWKEEEEEDEGSMESLTSSEGEEPGSEVVIKMPMVDPEAQAPTKQPPRSSPNTVKRPTKKGRDRAGKGQKPRGKEQLAKRKTFSLVKEKKAARTLSAILLAFILTWTPYNIMVLVSTFCKDCVPETLWELGYWLCYVNSTINPMCYALCNKAFRDTFRLLLLCRWDKRRWRKIPKRPGSVHRTPSRQC.

The Extracellular portion of the chain corresponds to 1-22 (MNTSAPPAVSPNITVLAPGKGP). 2 N-linked (GlcNAc...) asparagine glycosylation sites follow: Asn2 and Asn12. The helical transmembrane segment at 23–48 (WQVAFIGITTGLLSLATVTGNLLVLI) threads the bilayer. Residues 49–62 (SFKVNTELKTVNNY) are Cytoplasmic-facing. Residues 63–84 (FLLSLACADLIIGTFSMNLYTT) form a helical membrane-spanning segment. Over 85–95 (YLLMGHWALGT) the chain is Extracellular. Residues 96–121 (LACDLWLALDYVASNASVMNLLLISF) traverse the membrane as a helical segment. Cys98 and Cys178 are oxidised to a cystine. Over 122–142 (DRYFSVTRPLSYRAKRTPRRA) the chain is Cytoplasmic. A helical membrane pass occupies residues 143 to 164 (ALMIGLAWLVSFVLWAPAILFW). At 165 to 185 (QYLVGERTVLAGQCYIQFLSQ) the chain is on the extracellular side. The helical transmembrane segment at 186 to 209 (PIITFGTAMAAFYLPVTVMCTLYW) threads the bilayer. Over 210–366 (RIYRETENRA…LVKEKKAART (157 aa)) the chain is Cytoplasmic. Disordered regions lie at residues 225-256 (LQGSETPGKGGGSSSSSERSQPGAEGSPETPP), 274-297 (WKEEEEEDEGSMESLTSSEGEEPG), and 310-351 (EAQA…QLAK). Thr230 carries the post-translational modification Phosphothreonine. Positions 238–247 (SSSSERSQPG) are enriched in low complexity. The span at 328–343 (RPTKKGRDRAGKGQKP) shows a compositional bias: basic residues. Residues 367 to 390 (LSAILLAFILTWTPYNIMVLVSTF) form a helical membrane-spanning segment. The Extracellular segment spans residues 391-397 (CKDCVPE). A helical transmembrane segment spans residues 398 to 420 (TLWELGYWLCYVNSTINPMCYAL). Residues 421 to 460 (CNKAFRDTFRLLLLCRWDKRRWRKIPKRPGSVHRTPSRQC) are Cytoplasmic-facing. Thr428 carries the phosphothreonine modification. Residue Ser451 is modified to Phosphoserine. At Thr455 the chain carries Phosphothreonine. Ser457 bears the Phosphoserine mark.

Belongs to the G-protein coupled receptor 1 family. Muscarinic acetylcholine receptor subfamily. CHRM1 sub-subfamily. Interacts with GPRASP2. Interacts with TMEM147.

The protein resides in the cell membrane. Its subcellular location is the postsynaptic cell membrane. Its function is as follows. The muscarinic acetylcholine receptor mediates various cellular responses, including inhibition of adenylate cyclase, breakdown of phosphoinositides and modulation of potassium channels through the action of G proteins. Primary transducing effect is Pi turnover. The chain is Muscarinic acetylcholine receptor M1 (CHRM1) from Homo sapiens (Human).